The sequence spans 212 residues: Holliday junction branch migration complex subunit RuvA (212 aa).

A domain I region spans residues 1–63 (MIAKLKGLID…EDAISLFGFL (63 aa)). Residues 64 to 142 (ETGERDWFRL…KIALGGFSPG (79 aa)) form a domain II region. Residues 143–155 (GIKDALSASAPLP) form a flexible linker region. Residues 156–212 (AASGRMEDAVSALVNLGYKRLEAFQAVGETARELGDEADSSALIRAALKHLGKGLLG) form a domain III region.

The protein belongs to the RuvA family. In terms of assembly, homotetramer. Forms an RuvA(8)-RuvB(12)-Holliday junction (HJ) complex. HJ DNA is sandwiched between 2 RuvA tetramers; dsDNA enters through RuvA and exits via RuvB. An RuvB hexamer assembles on each DNA strand where it exits the tetramer. Each RuvB hexamer is contacted by two RuvA subunits (via domain III) on 2 adjacent RuvB subunits; this complex drives branch migration. In the full resolvosome a probable DNA-RuvA(4)-RuvB(12)-RuvC(2) complex forms which resolves the HJ.

The protein localises to the cytoplasm. The RuvA-RuvB-RuvC complex processes Holliday junction (HJ) DNA during genetic recombination and DNA repair, while the RuvA-RuvB complex plays an important role in the rescue of blocked DNA replication forks via replication fork reversal (RFR). RuvA specifically binds to HJ cruciform DNA, conferring on it an open structure. The RuvB hexamer acts as an ATP-dependent pump, pulling dsDNA into and through the RuvAB complex. HJ branch migration allows RuvC to scan DNA until it finds its consensus sequence, where it cleaves and resolves the cruciform DNA. The sequence is that of Holliday junction branch migration complex subunit RuvA from Paramagnetospirillum magneticum (strain ATCC 700264 / AMB-1) (Magnetospirillum magneticum).